A 296-amino-acid chain; its full sequence is NAD kinase (296 aa).

Catalysis depends on Asp-73, which acts as the Proton acceptor. Residues 73-74 (DG), Lys-78, 151-152 (NE), Arg-178, Asp-180, and 191-196 (TAHAMS) contribute to the NAD(+) site.

The protein belongs to the NAD kinase family. Requires a divalent metal cation as cofactor.

It localises to the cytoplasm. The enzyme catalyses NAD(+) + ATP = ADP + NADP(+) + H(+). Functionally, involved in the regulation of the intracellular balance of NAD and NADP, and is a key enzyme in the biosynthesis of NADP. Catalyzes specifically the phosphorylation on 2'-hydroxyl of the adenosine moiety of NAD to yield NADP. The chain is NAD kinase from Francisella tularensis subsp. novicida (strain U112).